The chain runs to 102 residues: Small ribosomal subunit protein uS10 (102 aa).

It belongs to the universal ribosomal protein uS10 family. As to quaternary structure, part of the 30S ribosomal subunit.

Functionally, involved in the binding of tRNA to the ribosomes. The sequence is that of Small ribosomal subunit protein uS10 from Methanoculleus marisnigri (strain ATCC 35101 / DSM 1498 / JR1).